The chain runs to 374 residues: Pectate lyase 3 (374 aa).

The first 22 residues, 1–22 (MKYLLPSTAAGLLLLAAQPTMA), serve as a signal peptide directing secretion. A disulfide bridge links Cys-93 with Cys-176. Positions 150, 152, 187, and 191 each coordinate Ca(2+). Arg-239 is an active-site residue. An intrachain disulfide couples Cys-350 to Cys-373.

The protein belongs to the polysaccharide lyase 1 family. PLADES subfamily. Ca(2+) is required as a cofactor.

It is found in the secreted. It catalyses the reaction Eliminative cleavage of (1-&gt;4)-alpha-D-galacturonan to give oligosaccharides with 4-deoxy-alpha-D-galact-4-enuronosyl groups at their non-reducing ends.. The protein operates within glycan metabolism; pectin degradation; 2-dehydro-3-deoxy-D-gluconate from pectin: step 2/5. Functionally, involved in maceration and soft-rotting of plant tissue. The protein is Pectate lyase 3 (pel3) of Pectobacterium atrosepticum (strain SCRI 1043 / ATCC BAA-672) (Erwinia carotovora subsp. atroseptica).